A 179-amino-acid chain; its full sequence is Large ribosomal subunit protein uL5 (179 aa).

Belongs to the universal ribosomal protein uL5 family. In terms of assembly, part of the 50S ribosomal subunit; part of the 5S rRNA/L5/L18/L25 subcomplex. Contacts the 5S rRNA and the P site tRNA. Forms a bridge to the 30S subunit in the 70S ribosome.

Its function is as follows. This is one of the proteins that bind and probably mediate the attachment of the 5S RNA into the large ribosomal subunit, where it forms part of the central protuberance. In the 70S ribosome it contacts protein S13 of the 30S subunit (bridge B1b), connecting the 2 subunits; this bridge is implicated in subunit movement. Contacts the P site tRNA; the 5S rRNA and some of its associated proteins might help stabilize positioning of ribosome-bound tRNAs. The chain is Large ribosomal subunit protein uL5 from Desulfotalea psychrophila (strain LSv54 / DSM 12343).